The chain runs to 190 residues: Superoxide dismutase [Fe] (190 aa).

4 residues coordinate Fe cation: His-27, His-75, Asp-156, and His-160.

It belongs to the iron/manganese superoxide dismutase family. In terms of assembly, homodimer. The cofactor is Fe cation.

It catalyses the reaction 2 superoxide + 2 H(+) = H2O2 + O2. In terms of biological role, destroys superoxide anion radicals which are normally produced within the cells and which are toxic to biological systems. The chain is Superoxide dismutase [Fe] (SODB) from Entamoeba histolytica (strain ATCC 30459 / HM-1:IMSS / ABRM).